The sequence spans 304 residues: Oxygen-dependent coproporphyrinogen-III oxidase (304 aa).

Serine 94 is a substrate binding site. A divalent metal cation-binding residues include histidine 98 and histidine 108. Histidine 108 acts as the Proton donor in catalysis. Substrate is bound at residue 110 to 112 (NVR). Histidine 147 and histidine 177 together coordinate a divalent metal cation. Residues 242–277 (YVEFNLVYDRGTLFGLQTGGRTESILMSMPPLVRWQ) are important for dimerization. 260–262 (GGR) provides a ligand contact to substrate.

The protein belongs to the aerobic coproporphyrinogen-III oxidase family. In terms of assembly, homodimer. It depends on a divalent metal cation as a cofactor.

Its subcellular location is the cytoplasm. It catalyses the reaction coproporphyrinogen III + O2 + 2 H(+) = protoporphyrinogen IX + 2 CO2 + 2 H2O. It functions in the pathway porphyrin-containing compound metabolism; protoporphyrin-IX biosynthesis; protoporphyrinogen-IX from coproporphyrinogen-III (O2 route): step 1/1. Involved in the heme biosynthesis. Catalyzes the aerobic oxidative decarboxylation of propionate groups of rings A and B of coproporphyrinogen-III to yield the vinyl groups in protoporphyrinogen-IX. This is Oxygen-dependent coproporphyrinogen-III oxidase from Shewanella amazonensis (strain ATCC BAA-1098 / SB2B).